Reading from the N-terminus, the 160-residue chain is SUMO-conjugating enzyme SCE1 (160 aa).

Ala-2 carries the N-acetylalanine modification. Residues 5–158 (IARGRLAEER…VKLQSKQYPA (154 aa)) form the UBC core domain. Cys-94 functions as the Glycyl thioester intermediate in the catalytic mechanism.

Belongs to the ubiquitin-conjugating enzyme family. In terms of assembly, interacts with SIZ1 (via PHD domain) and MMS21. Interacts with TCP14 and TCP15. Interacts with KIN10.

The protein operates within protein modification; protein sumoylation. Its function is as follows. SUMO-conjugating enzyme that accepts the SUMO proteins from the E1 SUMO-activating heterodimer SAE1/SAE2 and catalyzes its covalent attachment to other proteins with the E3 SUMO ligases SIZ1 and MMS21. Associates with SIZ1 for sumoylation of the transcription factor GTE3. This Arabidopsis thaliana (Mouse-ear cress) protein is SUMO-conjugating enzyme SCE1 (SCE1).